The chain runs to 401 residues: Adenosine 3'-phospho 5'-phosphosulfate transporter 2 (401 aa).

N-linked (GlcNAc...) asparagine glycans are attached at residues Asn-12 and Asn-71. A run of 6 helical transmembrane segments spans residues Leu-78–Leu-98, Tyr-111–Leu-131, Met-147–Leu-167, Pro-170–Ile-190, Val-200–Ile-220, and Asn-223–Gly-243. N-linked (GlcNAc...) asparagine glycosylation is present at Asn-254. Helical transmembrane passes span Ile-267 to Thr-287, Gly-298 to Leu-317, Leu-324 to Ala-346, and Phe-349 to Tyr-369.

This sequence belongs to the nucleotide-sugar transporter family. SLC35B subfamily.

It is found in the golgi apparatus membrane. The catalysed reaction is 3'-phosphoadenylyl sulfate(in) + adenosine 3',5'-bisphosphate(out) = 3'-phosphoadenylyl sulfate(out) + adenosine 3',5'-bisphosphate(in). Functionally, probably functions as a 3'-phosphoadenylyl sulfate:adenosine 3',5'-bisphosphate antiporter at the Golgi membranes. Mediates the transport from the cytosol into the lumen of the Golgi of 3'-phosphoadenylyl sulfate/adenosine 3'-phospho 5'-phosphosulfate (PAPS), a universal sulfuryl donor for sulfation events that take place in that compartment. The protein is Adenosine 3'-phospho 5'-phosphosulfate transporter 2 of Pongo abelii (Sumatran orangutan).